Consider the following 1249-residue polypeptide: MAQTNGELEHSKAETPEQLTNGNHPEETQEEEQNGGLFQISVKLPHEPYKIQVMVSSQEQVQDVRQSIVELPSTFQYTCFHLEFNGKRINDFVELSEVPDLKADSEIVLVEDPYTEKESRMHVIRMRELVGAAGDRVDNLQGISAGLSLHDSISEEAAAGETTEKEHSLSKYDIAGSPSLNTILPKAEAPLPKTVKSISLSPWNPVPYHLRQKGHLLYLQVTTNEGEQFQITSHVSGFFVNKCSNARFDPFPKPMPKKGSAHSLLTLISHLSPSFTTSFEALQEANNKKDLLTTFPFQNAIPNSPWLVAPPSSSVNAHQPDITRSQENYLISGVDNAETLRDWNEEFQTTRELPRDTVQDRVFRERLTSKLFADYNEAAARGAVLVAKGEVAPLNPTEDRDAQIFVYNNIFYSFGADGVGTFASEGGDEAARVAVGKDVVGIKAVNQLDINGLFTPGTVVVDYLGKRIVGQSIVPGIFKQREPGEHQIDYGGVEGKDVVATHPDFVPVFEKLSKALRIKKHAVWDKDGKRHDLEGSVETKGLLGTDGRKYVLDLYRVTPLDVMWQEEEGSDAYPHNMSVLRLELVESYWRHKMSQYVKAEVERRRAAKAVETASKEKSEENAESKEEGSEEKSEEALDQERVDISGFSLALNPDVCSGQIPQTDEEKEQWAQDEKEVRETCDFLRSKVMPELIQDLHDGDVGFPMDGQSLSQLLHKRGINIRYLGKLAQMSKEKGARLDALTLLLVQEMIARAFKHIANSYLRNVAAPFTASCIAHLLNCLLGADVNSNPQADIDASLREIYPEADFSFEKVTPTTLRAEIEKHVSTRYRYTPEPEWFNSLRHLQLLRDISIKLGLQLSAREYAFAKSQLPAKVPATNGASQEEGKKKKKKGGDSKSPARAASPEKPAVSIVPDDIVNIVPLVKDASPRSSLAEEALEAGRISLMQNQKQLGQELILESLSLHEQIYGILHPEVAKLYHQLSMLYYQTDEKEAAVELARKAVIVTERTLGVDSADTILSYLNLSLFEHASGNTKTALVYIKHAMDLWKIIYGPNHPDSITTMNNAAVMLQHLKQYSDSRKWFEASLTVCESLFGRQSINTATILFQLAQALALDQDSKGAVGKMRDAYNIFLSQLGPEDRNTKEAETWLEQLTQNAVSIAKHAKDIQARRLRRINMNTRTLGTKVQPQVGQSAPSASGASSANPSLDSRSIDELLKFIEGGDTSSSRTKQKKRAAASNPKLRGSKKSSA.

Positions 1–34 (MAQTNGELEHSKAETPEQLTNGNHPEETQEEEQN) are disordered. The Clu domain occupies 321-565 (DITRSQENYL…RVTPLDVMWQ (245 aa)). Disordered regions lie at residues 610 to 638 (VETA…EALD) and 874 to 907 (VPAT…PEKP). A compositionally biased stretch (basic and acidic residues) spans 613-638 (ASKEKSEENAESKEEGSEEKSEEALD). TPR repeat units lie at residues 975 to 1008 (AKLY…TERT), 1017 to 1050 (ILSY…WKII), and 1059 to 1092 (ITTM…CESL). The segment covering 1178–1191 (TRTLGTKVQPQVGQ) has biased composition (polar residues). Residues 1178 to 1249 (TRTLGTKVQP…KLRGSKKSSA (72 aa)) are disordered. Residues 1192–1205 (SAPSASGASSANPS) show a composition bias toward low complexity.

It belongs to the CLU family. In terms of assembly, may associate with the eukaryotic translation initiation factor 3 (eIF-3) complex.

It localises to the cytoplasm. Its function is as follows. mRNA-binding protein involved in proper cytoplasmic distribution of mitochondria. In Aspergillus oryzae (strain ATCC 42149 / RIB 40) (Yellow koji mold), this protein is Clustered mitochondria protein homolog.